Reading from the N-terminus, the 177-residue chain is Large ribosomal subunit protein uL6 (177 aa).

It belongs to the universal ribosomal protein uL6 family. Part of the 50S ribosomal subunit.

Functionally, this protein binds to the 23S rRNA, and is important in its secondary structure. It is located near the subunit interface in the base of the L7/L12 stalk, and near the tRNA binding site of the peptidyltransferase center. This chain is Large ribosomal subunit protein uL6, found in Rickettsia conorii (strain ATCC VR-613 / Malish 7).